The following is a 122-amino-acid chain: Small ribosomal subunit protein uS13 (122 aa).

Residues 94 to 122 form a disordered region; sequence LSLPVRGQRTKTNSRTRKGKRKTVAGKKK. A compositionally biased stretch (basic residues) spans 101-122; sequence QRTKTNSRTRKGKRKTVAGKKK.

The protein belongs to the universal ribosomal protein uS13 family. As to quaternary structure, part of the 30S ribosomal subunit. Forms a loose heterodimer with protein S19. Forms two bridges to the 50S subunit in the 70S ribosome.

In terms of biological role, located at the top of the head of the 30S subunit, it contacts several helices of the 16S rRNA. In the 70S ribosome it contacts the 23S rRNA (bridge B1a) and protein L5 of the 50S subunit (bridge B1b), connecting the 2 subunits; these bridges are implicated in subunit movement. Contacts the tRNAs in the A and P-sites. The chain is Small ribosomal subunit protein uS13 from Chlamydia trachomatis serovar A (strain ATCC VR-571B / DSM 19440 / HAR-13).